The sequence spans 271 residues: NADPH-dependent 7-cyano-7-deazaguanine reductase (271 aa).

81-83 (IES) contributes to the substrate binding site. Residue 83–84 (SK) coordinates NADPH. Residue cysteine 177 is the Thioimide intermediate of the active site. Aspartate 184 functions as the Proton donor in the catalytic mechanism. 216–217 (HE) serves as a coordination point for substrate. NADPH is bound at residue 245-246 (RG).

It belongs to the GTP cyclohydrolase I family. QueF type 2 subfamily. In terms of assembly, homodimer.

The protein localises to the cytoplasm. It carries out the reaction 7-aminomethyl-7-carbaguanine + 2 NADP(+) = 7-cyano-7-deazaguanine + 2 NADPH + 3 H(+). The protein operates within tRNA modification; tRNA-queuosine biosynthesis. Catalyzes the NADPH-dependent reduction of 7-cyano-7-deazaguanine (preQ0) to 7-aminomethyl-7-deazaguanine (preQ1). This chain is NADPH-dependent 7-cyano-7-deazaguanine reductase, found in Xanthomonas axonopodis pv. citri (strain 306).